Consider the following 416-residue polypeptide: MNKQSWLLNLSLLKTHPAFRAVFLARFISIVSLGLLGVAVPVQIQMMTHSTWQVGLSVTLTGGAMFVGLMVGGVLADRYERKKVILLARGTCGIGFIGLCLNALLPEPSLLAIYLLGLWDGFFASLGVTALLAATPALVGRENLMQAGAITMLTVRLGSVISPMIGGLLLATGGVAWNYGLAAAGTFITLLPLLSLPALPPPPQPREHPLKSLLAGFRFLLASPLVGGIALLGGLLTMASAVRVLYPALADNWQMSAAQIGFLYAAIPLGAAIGALTSGKLAHSVRPGLLMLLSTLGAFLAIGLFGLMPMWILGVVCLALFGWLSAVSSLLQYTMLQTQTPEAMLGRINGLWTAQNVTGDAIGAALLGGLGAMMTPVASASASGFGLLIIGVLLLLVLVELRRFRQTPPQVTASGS.

Residues 1 to 21 are Cytoplasmic-facing; that stretch reads MNKQSWLLNLSLLKTHPAFRA. The helical transmembrane segment at 22–42 threads the bilayer; it reads VFLARFISIVSLGLLGVAVPV. At 43 to 55 the chain is on the periplasmic side; the sequence is QIQMMTHSTWQVG. A helical membrane pass occupies residues 56–76; sequence LSVTLTGGAMFVGLMVGGVLA. Residues 77-83 lie on the Cytoplasmic side of the membrane; it reads DRYERKK. The helical transmembrane segment at 84–104 threads the bilayer; the sequence is VILLARGTCGIGFIGLCLNAL. At 105 to 109 the chain is on the periplasmic side; that stretch reads LPEPS. A helical membrane pass occupies residues 110–130; the sequence is LLAIYLLGLWDGFFASLGVTA. Over 131 to 156 the chain is Cytoplasmic; it reads LLAATPALVGRENLMQAGAITMLTVR. Residues 157-177 traverse the membrane as a helical segment; that stretch reads LGSVISPMIGGLLLATGGVAW. Asparagine 178 is a topological domain (periplasmic). A helical membrane pass occupies residues 179–199; it reads YGLAAAGTFITLLPLLSLPAL. Residues 200–218 are Cytoplasmic-facing; it reads PPPPQPREHPLKSLLAGFR. Residues 219–239 traverse the membrane as a helical segment; that stretch reads FLLASPLVGGIALLGGLLTMA. At 240–256 the chain is on the periplasmic side; it reads SAVRVLYPALADNWQMS. Residues 257 to 277 form a helical membrane-spanning segment; the sequence is AAQIGFLYAAIPLGAAIGALT. Topologically, residues 278 to 287 are cytoplasmic; sequence SGKLAHSVRP. Residues 288–307 form a helical membrane-spanning segment; the sequence is GLLMLLSTLGAFLAIGLFGL. Over 308–313 the chain is Periplasmic; that stretch reads MPMWIL. A helical membrane pass occupies residues 314–336; the sequence is GVVCLALFGWLSAVSSLLQYTML. At 337–356 the chain is on the cytoplasmic side; it reads QTQTPEAMLGRINGLWTAQN. The helical transmembrane segment at 357–377 threads the bilayer; that stretch reads VTGDAIGAALLGGLGAMMTPV. Residue alanine 378 is a topological domain, periplasmic. The helical transmembrane segment at 379–399 threads the bilayer; the sequence is SASASGFGLLIIGVLLLLVLV. The Cytoplasmic segment spans residues 400-416; the sequence is ELRRFRQTPPQVTASGS.

This sequence belongs to the major facilitator superfamily. EntS (TC 2.A.1.38) family.

The protein resides in the cell inner membrane. Its function is as follows. Component of an export pathway for enterobactin. The polypeptide is Enterobactin exporter EntS (Escherichia coli O6:K15:H31 (strain 536 / UPEC)).